Here is a 1134-residue protein sequence, read N- to C-terminus: MMS19 nucleotide excision repair protein homolog (1134 aa).

HEAT repeat units lie at residues 959 to 998 (QRCF…NVPV), 1002 to 1047 (LDNT…KGQQ), 1050 to 1089 (SDNA…LPHR), and 1092 to 1130 (YPFR…ITSG).

It belongs to the MET18/MMS19 family. As to quaternary structure, part of a complex composed of AE7, CIA1, MMS19 and NAR1. Interacts with AE7.

Its subcellular location is the nucleus. The protein localises to the cytoplasm. In terms of biological role, may select specific target apoproteins to which a Fe-S cluster produced by the cytosolic iron-sulfur (Fe-S) protein assembly (CIA) pathway is transferred. The protein is MMS19 nucleotide excision repair protein homolog of Arabidopsis thaliana (Mouse-ear cress).